The following is a 316-amino-acid chain: Ornithine carbamoyltransferase (316 aa).

Carbamoyl phosphate-binding positions include 57–60 (STRT), Q84, R108, and 135–138 (HPCQ). L-ornithine is bound by residues N166, D230, and 234 to 235 (SM). Carbamoyl phosphate-binding positions include 269–270 (CL) and R297.

It belongs to the aspartate/ornithine carbamoyltransferase superfamily. OTCase family.

The protein resides in the cytoplasm. The enzyme catalyses carbamoyl phosphate + L-ornithine = L-citrulline + phosphate + H(+). The protein operates within amino-acid degradation; L-arginine degradation via ADI pathway; carbamoyl phosphate from L-arginine: step 2/2. In terms of biological role, reversibly catalyzes the transfer of the carbamoyl group from carbamoyl phosphate (CP) to the N(epsilon) atom of ornithine (ORN) to produce L-citrulline. The chain is Ornithine carbamoyltransferase from Bacillus cereus (strain AH187).